Here is a 198-residue protein sequence, read N- to C-terminus: MPDSALPPCSILILAGGRGQRMGGRDKGLIEWQGLPLIAHLQRLVRPLTDDLIVSCNRNQERYAAYADRLVSDDSLDFPGPLAGIRAGLAVARHPWLLVLPCDAPRIDHALLETLLQAAGRAPARPWMLRCGGQWEPLFSLIPTHLAEEIEHAWRQGDRSPRHVLLPLGAQAIELAAGDPRLANLNTPELLAKHHELK.

GTP is bound by residues 14 to 16 (LAG), Lys-27, Asp-73, and Asp-103. Asp-103 is a binding site for Mg(2+).

This sequence belongs to the MobA family. Monomer. Mg(2+) is required as a cofactor.

Its subcellular location is the cytoplasm. The catalysed reaction is Mo-molybdopterin + GTP + H(+) = Mo-molybdopterin guanine dinucleotide + diphosphate. Transfers a GMP moiety from GTP to Mo-molybdopterin (Mo-MPT) cofactor (Moco or molybdenum cofactor) to form Mo-molybdopterin guanine dinucleotide (Mo-MGD) cofactor. In Pseudomonas paraeruginosa (strain DSM 24068 / PA7) (Pseudomonas aeruginosa (strain PA7)), this protein is Molybdenum cofactor guanylyltransferase.